The primary structure comprises 630 residues: tRNA uridine 5-carboxymethylaminomethyl modification enzyme MnmG (630 aa).

An FAD-binding site is contributed by 13 to 18 (GGGHAG). 273–287 (GPRYCPSIEDKIHRF) provides a ligand contact to NAD(+).

The protein belongs to the MnmG family. As to quaternary structure, homodimer. Heterotetramer of two MnmE and two MnmG subunits. FAD serves as cofactor.

It is found in the cytoplasm. Its function is as follows. NAD-binding protein involved in the addition of a carboxymethylaminomethyl (cmnm) group at the wobble position (U34) of certain tRNAs, forming tRNA-cmnm(5)s(2)U34. The sequence is that of tRNA uridine 5-carboxymethylaminomethyl modification enzyme MnmG from Pseudomonas putida (strain GB-1).